The following is a 208-amino-acid chain: Uracil phosphoribosyltransferase (208 aa).

Residues Arg78, Arg103, and 130 to 138 (DPMLATGGS) each bind 5-phospho-alpha-D-ribose 1-diphosphate. Residues Ile193 and 198 to 200 (GDA) each bind uracil. Asp199 provides a ligand contact to 5-phospho-alpha-D-ribose 1-diphosphate.

The protein belongs to the UPRTase family. Mg(2+) is required as a cofactor.

The enzyme catalyses UMP + diphosphate = 5-phospho-alpha-D-ribose 1-diphosphate + uracil. Its pathway is pyrimidine metabolism; UMP biosynthesis via salvage pathway; UMP from uracil: step 1/1. Allosterically activated by GTP. In terms of biological role, catalyzes the conversion of uracil and 5-phospho-alpha-D-ribose 1-diphosphate (PRPP) to UMP and diphosphate. This is Uracil phosphoribosyltransferase from Haemophilus influenzae (strain 86-028NP).